Here is a 399-residue protein sequence, read N- to C-terminus: Acetate kinase (399 aa).

Asn-7 contacts Mg(2+). Position 14 (Lys-14) interacts with ATP. Residue Arg-91 participates in substrate binding. The Proton donor/acceptor role is filled by Asp-148. ATP contacts are provided by residues 208–212 (HIGNG), 283–285 (DMR), and 331–335 (GVGEN). Glu-385 provides a ligand contact to Mg(2+).

This sequence belongs to the acetokinase family. In terms of assembly, homodimer. The cofactor is Mg(2+). Requires Mn(2+) as cofactor.

Its subcellular location is the cytoplasm. The enzyme catalyses acetate + ATP = acetyl phosphate + ADP. It functions in the pathway metabolic intermediate biosynthesis; acetyl-CoA biosynthesis; acetyl-CoA from acetate: step 1/2. Catalyzes the formation of acetyl phosphate from acetate and ATP. Can also catalyze the reverse reaction. The protein is Acetate kinase of Bacteroides thetaiotaomicron (strain ATCC 29148 / DSM 2079 / JCM 5827 / CCUG 10774 / NCTC 10582 / VPI-5482 / E50).